A 498-amino-acid chain; its full sequence is Angiopoietin-4 (498 aa).

Residues 1 to 22 (MPSPPAMLLGGLLLIVASTTVA) form the signal peptide. Residues 51–80 (EPEPCPPEPEAFGGSNSLQRDSPAATLNLG) form a disordered region. Positions 85-109 (QRMRQLEKMLENNTQWLQKLERYIQ) form a coiled coil. Residues N96, N126, N158, N247, N295, N306, N332, and N424 are each glycosylated (N-linked (GlcNAc...) asparagine). The stretch at 186–254 (HELHRLQGHN…SSNSSLLQRQ (69 aa)) forms a coiled coil. In terms of domain architecture, Fibrinogen C-terminal spans 277–497 (RAADQLFQDC…TTRMMVRPSG (221 aa)). C286 and C315 are disulfide-bonded. C439 and C452 are oxidised to a cystine.

As to quaternary structure, homodimer; disulfide-linked. Interacts with TEK/TIE2.

The protein resides in the secreted. Binds to TEK/TIE2, modulating ANGPT1 signaling. Can induce tyrosine phosphorylation of TEK/TIE2. Promotes endothelial cell survival, migration and angiogenesis. The sequence is that of Angiopoietin-4 (ANGPT4) from Bos taurus (Bovine).